Reading from the N-terminus, the 416-residue chain is Phosphatidylserine decarboxylase proenzyme, mitochondrial (416 aa).

At 1-67 (MPGKSTRPLP…GRLHFPQLAL (67 aa)) the chain is on the mitochondrial matrix side. The helical transmembrane segment at 68–86 (RRRLGQLSCMSKPALKLRS) threads the bilayer. Topologically, residues 87–416 (WPLTVLYYLL…IRFGEALGSL (330 aa)) are mitochondrial intermembrane. Active-site charge relay system; for autoendoproteolytic cleavage activity residues include Asp198, His274, and Ser385. The active-site Schiff-base intermediate with substrate; via pyruvic acid; for decarboxylase activity is the Ser385. Ser385 carries the post-translational modification Pyruvic acid (Ser); by autocatalysis.

It belongs to the phosphatidylserine decarboxylase family. PSD-B subfamily. Eukaryotic type I sub-subfamily. As to quaternary structure, heterodimer of a large membrane-associated beta subunit and a small pyruvoyl-containing alpha subunit. The cofactor is pyruvate. In terms of processing, is synthesized initially as an inactive proenzyme. Formation of the active enzyme involves a self-maturation process in which the active site pyruvoyl group is generated from an internal serine residue via an autocatalytic post-translational modification. Two non-identical subunits are generated from the proenzyme in this reaction, and the pyruvate is formed at the N-terminus of the alpha chain, which is derived from the carboxyl end of the proenzyme. The autoendoproteolytic cleavage occurs by a canonical serine protease mechanism, in which the side chain hydroxyl group of the serine supplies its oxygen atom to form the C-terminus of the beta chain, while the remainder of the serine residue undergoes an oxidative deamination to produce ammonia and the pyruvoyl prosthetic group on the alpha chain. During this reaction, the Ser that is part of the protease active site of the proenzyme becomes the pyruvoyl prosthetic group, which constitutes an essential element of the active site of the mature decarboxylase.

The protein localises to the mitochondrion inner membrane. It is found in the cytoplasm. It localises to the lipid droplet. The catalysed reaction is a 1,2-diacyl-sn-glycero-3-phospho-L-serine + H(+) = a 1,2-diacyl-sn-glycero-3-phosphoethanolamine + CO2. It participates in phospholipid metabolism; phosphatidylethanolamine biosynthesis. In terms of biological role, catalyzes the formation of phosphatidylethanolamine (PtdEtn) from phosphatidylserine (PtdSer). Plays a central role in phospholipid metabolism and in the interorganelle trafficking of phosphatidylserine. May be involved in lipid droplet biogenesis at the endoplasmic reticulum membrane. The sequence is that of Phosphatidylserine decarboxylase proenzyme, mitochondrial from Bos taurus (Bovine).